We begin with the raw amino-acid sequence, 1664 residues long: DNA-directed RNA polymerase I subunit RPA190 (1664 aa).

Positions 62, 65, 72, 75, 102, 105, 233, and 236 each coordinate Zn(2+). Residues 280-310 (QAKKLDGSNEASANDEESFDVGRNPTTRPKT) are disordered. The Mg(2+) site is built by Asp-627, Asp-629, and Asp-631. A Phosphoserine modification is found at Ser-889. The interval 992 to 1004 (PQEYYFHCMAGRE) is bridging helix. The disordered stretch occupies residues 1343–1423 (DIGVAVPRLQ…DSDSEDEDVD (81 aa)). Residues 1393–1414 (ETMREAEKSSDEEGIDSDKESD) are compositionally biased toward basic and acidic residues. Position 1636 is a phosphoserine (Ser-1636).

Belongs to the RNA polymerase beta' chain family. In terms of assembly, component of the RNA polymerase I (Pol I) complex consisting of 14 subunits: RPA135, RPA190, RPC40, RPA14, RPB5, RPO26, RPA43, RPB8, RPA12, RPB10, RPC19, RPC10, RPA49 and RPA34. The complex is composed of a horseshoe-shaped core containing ten subunits (RPA135, RPA190, RPB5, RPO26, RPB8, RPB10, RPC10, RPA12, RPC19 and RPC40) where RPA135 and RPA190 form the DNA-binding cleft. Outside of the core, RPA14 and RPA43 form the stalk that mediates interactions with transcription initiation factors and newly synthesized RNA.

Its subcellular location is the nucleus. The protein localises to the nucleolus. It catalyses the reaction RNA(n) + a ribonucleoside 5'-triphosphate = RNA(n+1) + diphosphate. Functionally, DNA-dependent RNA polymerases catalyze the transcription of DNA into RNA using the four ribonucleoside triphosphates as substrates. Component of RNA polymerase I (Pol I) which synthesizes ribosomal RNA precursors. Besides, RNA polymerase I has intrinsic RNA cleavage activity. RPA190 and RPA135 both contribute to the polymerase catalytic activity and together form the Pol I active center. In addition, subunit RPA12 contributes a catalytic zinc ribbon that is required for RNA cleavage by Pol I. A single stranded DNA template strand of the promoter is positioned within the central active site cleft of Pol I. A bridging helix emanates from RPA190 and crosses the cleft near the catalytic site and is thought to promote translocation of Pol I by acting as a ratchet that moves the RNA-DNA hybrid through the active site by switching from straight to bent conformations at each step of nucleotide addition. The protein is DNA-directed RNA polymerase I subunit RPA190 (RPA190) of Saccharomyces cerevisiae (strain ATCC 204508 / S288c) (Baker's yeast).